The sequence spans 131 residues: Small ribosomal subunit protein eS24 (131 aa).

An N-acetylmethionine modification is found at Met1. The residue at position 9 (Thr9) is a Phosphothreonine. Lys37 is covalently cross-linked (Glycyl lysine isopeptide (Lys-Gly) (interchain with G-Cter in SUMO2)). Residues 90–100 show a composition bias toward basic and acidic residues; that stretch reads RLARHGLYEKK. A disordered region spans residues 90 to 131; that stretch reads RLARHGLYEKKKTSRKQRKERKNRMKKVRGTAKANVGAGKKK. Residues 101-119 show a composition bias toward basic residues; that stretch reads KTSRKQRKERKNRMKKVRG.

The protein belongs to the eukaryotic ribosomal protein eS24 family. As to quaternary structure, component of the small ribosomal subunit. Part of the small subunit (SSU) processome, composed of more than 70 proteins and the RNA chaperone small nucleolar RNA (snoRNA) U3.

The protein resides in the cytoplasm. Its subcellular location is the nucleus. It is found in the nucleolus. Its function is as follows. Component of the small ribosomal subunit. The ribosome is a large ribonucleoprotein complex responsible for the synthesis of proteins in the cell. Required for processing of pre-rRNA and maturation of 40S ribosomal subunits. Part of the small subunit (SSU) processome, first precursor of the small eukaryotic ribosomal subunit. During the assembly of the SSU processome in the nucleolus, many ribosome biogenesis factors, an RNA chaperone and ribosomal proteins associate with the nascent pre-rRNA and work in concert to generate RNA folding, modifications, rearrangements and cleavage as well as targeted degradation of pre-ribosomal RNA by the RNA exosome. The protein is Small ribosomal subunit protein eS24 (RPS24) of Pongo abelii (Sumatran orangutan).